A 910-amino-acid polypeptide reads, in one-letter code: Aconitate hydratase A (910 aa).

3 residues coordinate [4Fe-4S] cluster: Cys-454, Cys-520, and Cys-523.

This sequence belongs to the aconitase/IPM isomerase family. As to quaternary structure, monomer. It depends on [4Fe-4S] cluster as a cofactor.

The enzyme catalyses citrate = D-threo-isocitrate. The catalysed reaction is (2S,3R)-3-hydroxybutane-1,2,3-tricarboxylate = 2-methyl-cis-aconitate + H2O. The protein operates within carbohydrate metabolism; tricarboxylic acid cycle; isocitrate from oxaloacetate: step 2/2. It participates in organic acid metabolism; propanoate degradation. Involved in the catabolism of short chain fatty acids (SCFA) via the tricarboxylic acid (TCA)(acetyl degradation route) and probably the 2-methylcitrate cycle I (propionate degradation route). Catalyzes the reversible isomerization of citrate to isocitrate via cis-aconitate. Could catalyze the hydration of 2-methyl-cis-aconitate to yield (2R,3S)-2-methylisocitrate. The apo form of AcnA functions as a RNA-binding regulatory protein. The sequence is that of Aconitate hydratase A (acnA) from Pseudomonas aeruginosa (strain ATCC 15692 / DSM 22644 / CIP 104116 / JCM 14847 / LMG 12228 / 1C / PRS 101 / PAO1).